Reading from the N-terminus, the 369-residue chain is Trans-enoyl reductase pyiC (369 aa).

Residue 52-55 (CDYK) coordinates NADP(+). 137-144 (TGIGTLGM) lines the substrate pocket. NADP(+) is bound by residues 195 to 198 (SPKN), tyrosine 213, and 260 to 261 (LE). Substrate is bound at residue 280 to 284 (GPLLL). 349–350 (VS) contributes to the NADP(+) binding site.

This sequence belongs to the zinc-containing alcohol dehydrogenase family. As to quaternary structure, monomer.

It participates in mycotoxin biosynthesis. Trans-enoyl reductase; part of the gene cluster that mediates the biosynthesis of the mycotoxin pyrichalasin H, a tyrosine-derived cytochalasan that inhibits the growth of rice seedlings, but also inhibits lymphocyte capping and actin polymerization and alters cell morphology. Pyrichalasin H is indicated as the responsible agent for the genus-specific pathogenicity of M.grisea toward crabgrass. The first step in the pathway is catalyzed by the O-methyltransferase pyiA which methylates free tyrosine to generate the precursor O-methyltyrosine. The hybrid PKS-NRPS pyiS, assisted by the enoyl reductase pyiC, are responsible for fusion of the O-methyltyrosine precursor and the polyketide backbone. The polyketide synthase module (PKS) of pyiS is responsible for the synthesis of the polyketide backbone and the downstream nonribosomal peptide synthetase (NRPS) amidates the carboxyl end of the polyketide with the O-methyltyrosine precursor. As the NRPS A-domain demonstrates substrate tolerance, pyiS can also use phenylalanine, tyrosine and even para-chlorophenylalanine as amino acid precursor, which leads to the production of novel cytochalasans, including halogenated cytochalasans. Because pyiS lacks a designated enoylreductase (ER) domain, the required activity is provided the enoyl reductase pyiC. Reduction by the hydrolyase pyiE, followed by dehydration and intra-molecular Diels-Alder cyclization by the Diels-Alderase pyiF then yield the required isoindolone-fused macrocycle. The tailoring cytochrome P450 monooxygenases piyD and piyG catalyze the hydroxylation at C-18 and C-7, respectivily, whereas the short-chain dehydrogenase/reductase pyiH reduces the carbonyl at C-21 in preparation for the transfer of an acetyl group by the acetyltransferase pyiB. These 3 reactions whose order is not clear yet, lead to the production of O-methylpyrichalasin J, a deacetylated pyrichalasin H. Finally, pyiB to converts O-methylpyrichalasin J into the final product pyrichalasin H via acetylation of C-21. The sequence is that of Trans-enoyl reductase pyiC from Pyricularia grisea (Crabgrass-specific blast fungus).